The primary structure comprises 185 residues: Ribosome-recycling factor (185 aa).

This sequence belongs to the RRF family.

It localises to the cytoplasm. Responsible for the release of ribosomes from messenger RNA at the termination of protein biosynthesis. May increase the efficiency of translation by recycling ribosomes from one round of translation to another. In Shewanella sp. (strain MR-4), this protein is Ribosome-recycling factor.